Reading from the N-terminus, the 578-residue chain is Proline--tRNA ligase (578 aa).

This sequence belongs to the class-II aminoacyl-tRNA synthetase family. ProS type 1 subfamily. In terms of assembly, homodimer.

Its subcellular location is the cytoplasm. It catalyses the reaction tRNA(Pro) + L-proline + ATP = L-prolyl-tRNA(Pro) + AMP + diphosphate. Functionally, catalyzes the attachment of proline to tRNA(Pro) in a two-step reaction: proline is first activated by ATP to form Pro-AMP and then transferred to the acceptor end of tRNA(Pro). As ProRS can inadvertently accommodate and process non-cognate amino acids such as alanine and cysteine, to avoid such errors it has two additional distinct editing activities against alanine. One activity is designated as 'pretransfer' editing and involves the tRNA(Pro)-independent hydrolysis of activated Ala-AMP. The other activity is designated 'posttransfer' editing and involves deacylation of mischarged Ala-tRNA(Pro). The misacylated Cys-tRNA(Pro) is not edited by ProRS. This is Proline--tRNA ligase from Brachyspira hyodysenteriae (strain ATCC 49526 / WA1).